The following is a 178-amino-acid chain: uncharacterized protein (178 aa).

A helical membrane pass occupies residues 7 to 27 (LAIGTAILLIGMAYWTVSIVE).

It is found in the membrane. This is an uncharacterized protein from Methanocaldococcus jannaschii (strain ATCC 43067 / DSM 2661 / JAL-1 / JCM 10045 / NBRC 100440) (Methanococcus jannaschii).